The following is a 123-amino-acid chain: MLPVAVVLVVFAVAVTSAESIHQVNPLPRRRRLKGTEEKGHHTNVNDEERVISLESASDLISKLKVKINAKLLAGDSAKPATLSKAQVASVAKEVVKEVKKTPKVWPPPMIKKGVRRGAGGVR.

A signal peptide spans 1 to 18; that stretch reads MLPVAVVLVVFAVAVTSA. Residues 24-46 are disordered; the sequence is VNPLPRRRRLKGTEEKGHHTNVN. Positions 30–50 match the RxLR-dEER motif; sequence RRRLKGTEEKGHHTNVNDEER. The segment covering 34–46 has biased composition (basic and acidic residues); the sequence is KGTEEKGHHTNVN. A biP-binding region spans residues 60 to 82; the sequence is LISKLKVKINAKLLAGDSAKPAT.

The protein belongs to the RxLR effector family. In terms of assembly, interacts with host plant ER-luminal binding immunoglobulin proteins (BiPs) such as soybean BiP1, BiP2, BiP3 and BiP4.

It is found in the secreted. The protein localises to the host endoplasmic reticulum. Its function is as follows. Effector that suppresses plant defense responses during the early stages of pathogen infection. Suppresses cell death induced by effectors and PAMPs in plant hosts. Avh262 stabilizes endoplasmic reticulum (ER)-luminal binding immunoglobulin proteins (BiPs), which act as negative regulators of plant resistance to Phytophthora. By stabilizing BiPs, Avh262 suppresses ER stress-triggered cell death and facilitates Phytophthora infection. The protein is RxLR effector protein Avh262 of Phytophthora sojae (Soybean stem and root rot agent).